A 304-amino-acid polypeptide reads, in one-letter code: UDP-N-acetylenolpyruvoylglucosamine reductase (304 aa).

An FAD-binding PCMH-type domain is found at 33 to 198 (RVGGPVDILL…ITATFCFESG (166 aa)). The active site involves Arg177. The Proton donor role is filled by Ser227. Glu297 is a catalytic residue.

Belongs to the MurB family. Requires FAD as cofactor.

Its subcellular location is the cytoplasm. The enzyme catalyses UDP-N-acetyl-alpha-D-muramate + NADP(+) = UDP-N-acetyl-3-O-(1-carboxyvinyl)-alpha-D-glucosamine + NADPH + H(+). It functions in the pathway cell wall biogenesis; peptidoglycan biosynthesis. Cell wall formation. This chain is UDP-N-acetylenolpyruvoylglucosamine reductase, found in Clostridium botulinum (strain Eklund 17B / Type B).